A 290-amino-acid chain; its full sequence is 6-phospho-5-dehydro-2-deoxy-D-gluconate aldolase (290 aa).

The active-site Proton donor is the aspartate 85. Positions 86 and 180 each coordinate Zn(2+). Position 181 (glycine 181) interacts with dihydroxyacetone phosphate. Histidine 208 contributes to the Zn(2+) binding site. Residues 209 to 211 (GAS) and 230 to 233 (NINT) each bind dihydroxyacetone phosphate. A Phosphothreonine modification is found at threonine 233.

The protein belongs to the class II fructose-bisphosphate aldolase family. IolJ subfamily. Requires Zn(2+) as cofactor.

It carries out the reaction 6-phospho-5-dehydro-2-deoxy-D-gluconate = 3-oxopropanoate + dihydroxyacetone phosphate. It participates in polyol metabolism; myo-inositol degradation into acetyl-CoA; acetyl-CoA from myo-inositol: step 6/7. In terms of biological role, produces dihydroxyacetone phosphate (DHAP or glycerone phosphate) and malonic semialdehyde (MSA or 3-oxopropanoate) from 6-phospho-5-dehydro-2-deoxy-D-gluconate (DKGP). The polypeptide is 6-phospho-5-dehydro-2-deoxy-D-gluconate aldolase (iolJ) (Bacillus subtilis (strain 168)).